Reading from the N-terminus, the 399-residue chain is Enolase (399 aa).

Residue Q152 participates in (2R)-2-phosphoglycerate binding. E194 (proton donor) is an active-site residue. Residues D230, E273, and D301 each contribute to the Mg(2+) site. (2R)-2-phosphoglycerate contacts are provided by K326, R355, S356, and K377. The Proton acceptor role is filled by K326.

It belongs to the enolase family. Requires Mg(2+) as cofactor.

Its subcellular location is the cytoplasm. It is found in the secreted. It localises to the cell surface. The catalysed reaction is (2R)-2-phosphoglycerate = phosphoenolpyruvate + H2O. The protein operates within carbohydrate degradation; glycolysis; pyruvate from D-glyceraldehyde 3-phosphate: step 4/5. Catalyzes the reversible conversion of 2-phosphoglycerate (2-PG) into phosphoenolpyruvate (PEP). It is essential for the degradation of carbohydrates via glycolysis. The sequence is that of Enolase from Methanocorpusculum labreanum (strain ATCC 43576 / DSM 4855 / Z).